The following is an 86-amino-acid chain: Large ribosomal subunit protein bL27 (86 aa).

The segment at 1–22 is disordered; it reads MAHKKAGGSTRNGRDSESKRLG.

Belongs to the bacterial ribosomal protein bL27 family.

In Vibrio cholerae serotype O1 (strain ATCC 39315 / El Tor Inaba N16961), this protein is Large ribosomal subunit protein bL27.